A 75-amino-acid polypeptide reads, in one-letter code: DNA-directed RNA polymerase subunit omega (75 aa).

It belongs to the RNA polymerase subunit omega family. In terms of assembly, in cyanobacteria the RNAP catalytic core is composed of 2 alpha, 1 beta, 1 beta', 1 gamma and 1 omega subunit. When a sigma factor is associated with the core the holoenzyme is formed, which can initiate transcription.

It carries out the reaction RNA(n) + a ribonucleoside 5'-triphosphate = RNA(n+1) + diphosphate. In terms of biological role, promotes RNA polymerase assembly. Latches the N- and C-terminal regions of the beta' subunit thereby facilitating its interaction with the beta and alpha subunits. This Cyanothece sp. (strain PCC 7425 / ATCC 29141) protein is DNA-directed RNA polymerase subunit omega.